The following is a 688-amino-acid chain: MGKVVGIDLGTTNSVVAVMEGGKPVVIANAEGMRTTPSVVGFSKDGERVVGQMARRQTVLNPQNTFFAVKRYIGRRYNELSPESKRVPYTIRKDEVGNIKVACPRLNKEFSAEEISAMVLKKLADDASAYLGSAVTGAVITVPAYFNDSQRQATRDAGRIAGLEVLRILNEPTAASLAYGLDRGDTETILVFDLGGGTFDVSILEVGDGVFEVKATSGDTQLGGNDFDKKIVDWLAEQFLETEGVDLRRDRQALQRLMEAAEKAKIELSAVSITDINLPFITATEDGPKHLETRLTRSQFEGLCVDLLGRVRNPVKRALKDAGLRPDDIEEVVLVGGSTRMPMVKQLVRDLIGIEPSENVNPDEVVAMGAAIQAGILAGEFKDVLLLDVTPLSLGLEAIGGVMKKLIPRNTTIPVRRSDIFSTSENNQNSVEIHVVQGEREMAGDNKSLGRFKLYGIPPAPRGIPQIQVAFDIDANGILQVTALDRTTGREQSITIQGASTLSESEVNRMIQEAQKYADVDRERKERVEKRTRSEALILQGERQLREVALEFGMQFARNRRQRIDNISRELKESLKENDDRGIDQAYADLQDALYELNREVRQYYAEDEDDDLFATIKDIFVGDKDKERDLPRDSYRERDAYNNRDYGRDYGRDYGRDSRPSYDNSRPPRKSPRPSYQDNWDDDDDWL.

Threonine 198 carries the phosphothreonine; by autocatalysis modification. Over residues 630–661 the composition is skewed to basic and acidic residues; that stretch reads DLPRDSYRERDAYNNRDYGRDYGRDYGRDSRP. The disordered stretch occupies residues 630–688; the sequence is DLPRDSYRERDAYNNRDYGRDYGRDYGRDSRPSYDNSRPPRKSPRPSYQDNWDDDDDWL.

It belongs to the heat shock protein 70 family.

Acts as a chaperone. The sequence is that of Chaperone protein dnaK1 (dnaK1) from Nostoc sp. (strain PCC 7120 / SAG 25.82 / UTEX 2576).